Here is a 548-residue protein sequence, read N- to C-terminus: Glucose-6-phosphate isomerase (548 aa).

Catalysis depends on E353, which acts as the Proton donor. Active-site residues include H384 and K512.

This sequence belongs to the GPI family.

Its subcellular location is the cytoplasm. It catalyses the reaction alpha-D-glucose 6-phosphate = beta-D-fructose 6-phosphate. It functions in the pathway carbohydrate biosynthesis; gluconeogenesis. The protein operates within carbohydrate degradation; glycolysis; D-glyceraldehyde 3-phosphate and glycerone phosphate from D-glucose: step 2/4. In terms of biological role, catalyzes the reversible isomerization of glucose-6-phosphate to fructose-6-phosphate. This chain is Glucose-6-phosphate isomerase, found in Pseudoalteromonas translucida (strain TAC 125).